The chain runs to 502 residues: Glycerol kinase (502 aa).

Thr14 contributes to the ADP binding site. Positions 14, 15, and 16 each coordinate ATP. Thr14 lines the sn-glycerol 3-phosphate pocket. Arg18 lines the ADP pocket. 4 residues coordinate sn-glycerol 3-phosphate: Arg84, Glu85, Tyr136, and Asp246. The glycerol site is built by Arg84, Glu85, Tyr136, Asp246, and Gln247. Residues Thr268 and Gly311 each coordinate ADP. Residues Thr268, Gly311, Gln315, and Gly412 each contribute to the ATP site. Gly412 and Asn416 together coordinate ADP.

The protein belongs to the FGGY kinase family. Homotetramer and homodimer (in equilibrium). Heterodimer with EIIA-Glc. Binds 1 zinc ion per glycerol kinase EIIA-Glc dimer. The zinc ion is important for dimerization.

The enzyme catalyses glycerol + ATP = sn-glycerol 3-phosphate + ADP + H(+). Its pathway is polyol metabolism; glycerol degradation via glycerol kinase pathway; sn-glycerol 3-phosphate from glycerol: step 1/1. Activity of this regulatory enzyme is affected by several metabolites. Allosterically and non-competitively inhibited by fructose 1,6-bisphosphate (FBP) and unphosphorylated phosphocarrier protein EIIA-Glc (III-Glc), an integral component of the bacterial phosphotransferase (PTS) system. In terms of biological role, key enzyme in the regulation of glycerol uptake and metabolism. Catalyzes the phosphorylation of glycerol to yield sn-glycerol 3-phosphate. The sequence is that of Glycerol kinase from Escherichia coli (strain ATCC 8739 / DSM 1576 / NBRC 3972 / NCIMB 8545 / WDCM 00012 / Crooks).